The following is a 154-amino-acid chain: U1 small nuclear ribonucleoprotein C (154 aa).

Residues 4–36 form a Matrin-type zinc finger; it reads YYCDYCDTYLTHDSPSVRKTHCTGRKHKDNVKF.

Belongs to the U1 small nuclear ribonucleoprotein C family. In terms of assembly, U1 snRNP is composed of the 7 core Sm proteins B/B', D1, D2, D3, E, F and G that assemble in a heptameric protein ring on the Sm site of the small nuclear RNA to form the core snRNP, and at least 3 U1 snRNP-specific proteins U1-70K, U1-A and U1-C. U1-C interacts with U1 snRNA and the 5' splice-site region of the pre-mRNA.

It is found in the nucleus. Its function is as follows. Component of the spliceosomal U1 snRNP, which is essential for recognition of the pre-mRNA 5' splice-site and the subsequent assembly of the spliceosome. U1-C is directly involved in initial 5' splice-site recognition for both constitutive and regulated alternative splicing. The interaction with the 5' splice-site seems to precede base-pairing between the pre-mRNA and the U1 snRNA. Stimulates commitment or early (E) complex formation by stabilizing the base pairing of the 5' end of the U1 snRNA and the 5' splice-site region. The chain is U1 small nuclear ribonucleoprotein C from Aedes aegypti (Yellowfever mosquito).